Consider the following 91-residue polypeptide: Small ribosomal subunit protein bS16 (91 aa).

The protein belongs to the bacterial ribosomal protein bS16 family.

The chain is Small ribosomal subunit protein bS16 from Levilactobacillus brevis (strain ATCC 367 / BCRC 12310 / CIP 105137 / JCM 1170 / LMG 11437 / NCIMB 947 / NCTC 947) (Lactobacillus brevis).